The following is a 188-amino-acid chain: Large ribosomal subunit protein uL5 (188 aa).

The protein belongs to the universal ribosomal protein uL5 family. Part of the 50S ribosomal subunit; contacts the 5S rRNA and probably tRNA. Forms a bridge to the 30S subunit in the 70S ribosome.

In terms of biological role, this is one of the proteins that bind and probably mediate the attachment of the 5S RNA into the large ribosomal subunit, where it forms part of the central protuberance. In the 70S ribosome it contacts protein S13 of the 30S subunit (bridge B1b), connecting the 2 subunits; this bridge is implicated in subunit movement. May contact the P site tRNA; the 5S rRNA and some of its associated proteins might help stabilize positioning of ribosome-bound tRNAs. The polypeptide is Large ribosomal subunit protein uL5 (Pyrococcus abyssi (strain GE5 / Orsay)).